A 231-amino-acid polypeptide reads, in one-letter code: Probable glutathione S-transferase GSTU1 (231 aa).

The region spanning Lys-5 to Pro-84 is the GST N-terminal domain. Glutathione-binding positions include Ser-15, Lys-42, Ile-56, and Glu-68–Ser-69. The 124-residue stretch at Ala-97 to Phe-220 folds into the GST C-terminal domain.

The protein belongs to the GST superfamily. Tau family.

It carries out the reaction RX + glutathione = an S-substituted glutathione + a halide anion + H(+). Conjugation of reduced glutathione to a wide number of exogenous and endogenous hydrophobic electrophiles. The chain is Probable glutathione S-transferase GSTU1 (GSTU1) from Oryza sativa subsp. indica (Rice).